A 122-amino-acid chain; its full sequence is Large ribosomal subunit protein uL14 (122 aa).

The protein belongs to the universal ribosomal protein uL14 family. As to quaternary structure, part of the 50S ribosomal subunit. Forms a cluster with proteins L3 and L19. In the 70S ribosome, L14 and L19 interact and together make contacts with the 16S rRNA in bridges B5 and B8.

Its function is as follows. Binds to 23S rRNA. Forms part of two intersubunit bridges in the 70S ribosome. The chain is Large ribosomal subunit protein uL14 from Methylococcus capsulatus (strain ATCC 33009 / NCIMB 11132 / Bath).